A 323-amino-acid chain; its full sequence is tRNA dimethylallyltransferase (323 aa).

13–20 (GPTASGKT) is an ATP binding site. 15-20 (TASGKT) contacts substrate. 4 interaction with substrate tRNA regions span residues 42–45 (DSAL), 166–170 (QRIQR), 251–256 (RCVGYR), and 284–291 (KRQITWLR).

It belongs to the IPP transferase family. In terms of assembly, monomer. Requires Mg(2+) as cofactor.

It carries out the reaction adenosine(37) in tRNA + dimethylallyl diphosphate = N(6)-dimethylallyladenosine(37) in tRNA + diphosphate. Functionally, catalyzes the transfer of a dimethylallyl group onto the adenine at position 37 in tRNAs that read codons beginning with uridine, leading to the formation of N6-(dimethylallyl)adenosine (i(6)A). The protein is tRNA dimethylallyltransferase of Acidovorax ebreus (strain TPSY) (Diaphorobacter sp. (strain TPSY)).